An 88-amino-acid chain; its full sequence is MGTARFLRAVLLLSVLLMVTFPALLSAEHHDGRVDICRLPSDSGDCLRFFEMWYFDGTTCTKFVYGGYGGNDNRFPTEKACMKRCAKA.

Positions 1 to 27 (MGTARFLRAVLLLSVLLMVTFPALLSA) are cleaved as a signal peptide. Residues 28-33 (EHHDGR) constitute a propeptide that is removed on maturation. The BPTI/Kunitz inhibitor domain maps to 37-85 (CRLPSDSGDCLRFFEMWYFDGTTCTKFVYGGYGGNDNRFPTEKACMKRC). 2 cysteine pairs are disulfide-bonded: Cys-37–Cys-85 and Cys-60–Cys-81.

This sequence belongs to the venom Kunitz-type family. 03 (sub-Kunitz) subfamily. In terms of tissue distribution, expressed by the venom gland.

Its subcellular location is the secreted. In terms of biological role, serine protease inhibitor that inhibits trypsin at a molar ratio of 1:1. This is Kunitz-type U15-theraphotoxin-Hhn1a from Cyriopagopus hainanus (Chinese bird spider).